The following is a 256-amino-acid chain: Thiazole synthase (256 aa).

K96 (schiff-base intermediate with DXP) is an active-site residue. 1-deoxy-D-xylulose 5-phosphate is bound by residues G157, 183-184 (AG), and 205-206 (NT).

It belongs to the ThiG family. In terms of assembly, homotetramer. Forms heterodimers with either ThiH or ThiS.

The protein localises to the cytoplasm. The catalysed reaction is [ThiS sulfur-carrier protein]-C-terminal-Gly-aminoethanethioate + 2-iminoacetate + 1-deoxy-D-xylulose 5-phosphate = [ThiS sulfur-carrier protein]-C-terminal Gly-Gly + 2-[(2R,5Z)-2-carboxy-4-methylthiazol-5(2H)-ylidene]ethyl phosphate + 2 H2O + H(+). It functions in the pathway cofactor biosynthesis; thiamine diphosphate biosynthesis. Catalyzes the rearrangement of 1-deoxy-D-xylulose 5-phosphate (DXP) to produce the thiazole phosphate moiety of thiamine. Sulfur is provided by the thiocarboxylate moiety of the carrier protein ThiS. In vitro, sulfur can be provided by H(2)S. This is Thiazole synthase from Bacillus anthracis.